The following is a 310-amino-acid chain: Proline iminopeptidase (310 aa).

One can recognise an AB hydrolase-1 domain in the interval 41 to 288 (LVTLHGGPGG…NSSHMAMWEE (248 aa)). Catalysis depends on Ser116, which acts as the Nucleophile. Residue Asp255 is part of the active site. His282 functions as the Proton donor in the catalytic mechanism.

This sequence belongs to the peptidase S33 family. In terms of assembly, part of the tricorn proteolytic complex.

It carries out the reaction Release of N-terminal proline from a peptide.. In terms of biological role, cleaves H-Pro-AMC as well as a wide spectrum of amino acid substrates and several peptide substrates without a proline at the N-terminus. In conjunction with the three factors F1, F2 and F3, Tricorn degrades oligopeptides in a sequential manner, yielding free amino acids. The polypeptide is Proline iminopeptidase (pip) (Saccharolobus solfataricus (strain ATCC 35092 / DSM 1617 / JCM 11322 / P2) (Sulfolobus solfataricus)).